A 230-amino-acid chain; its full sequence is Prepilin leader peptidase/N-methyltransferase (230 aa).

Helical transmembrane passes span 1 to 21 (MIYF…WFYL), 60 to 80 (GHIL…QIAF), 84 to 104 (IFTV…YLDW), 114 to 134 (CLWL…LLTL), 140 to 160 (SAAS…FYYG), 181 to 201 (LETL…FSLI), and 208 to 228 (FLPF…VKYY).

The protein belongs to the peptidase A24 family.

It is found in the cell inner membrane. The enzyme catalyses Typically cleaves a -Gly-|-Phe- bond to release an N-terminal, basic peptide of 5-8 residues from type IV prepilin, and then N-methylates the new N-terminal amino group, the methyl donor being S-adenosyl-L-methionine.. Functionally, plays a role in type II pseudopili formation by proteolytically removing the leader sequence from substrate proteins and subsequently monomethylating the alpha-amino group of the newly exposed N-terminal phenylalanine. Substrates include proteins required for biogenesis of the type II general secretory apparatus. The sequence is that of Prepilin leader peptidase/N-methyltransferase (hofD) from Haemophilus influenzae (strain ATCC 51907 / DSM 11121 / KW20 / Rd).